We begin with the raw amino-acid sequence, 374 residues long: Chaperone protein DnaJ (374 aa).

A J domain is found at 5-70 (CYYEILNVSK…SKRSRYDQFG (66 aa)). The CR-type zinc finger occupies 130 to 207 (GVEKEITIPR…CYGNGKVKKQ (78 aa)). Residues C143, C146, C159, C162, C181, C184, C195, and C198 each coordinate Zn(2+). 4 CXXCXGXG motif repeats span residues 143 to 150 (CDSCDGTG), 159 to 166 (CHACHGQG), 181 to 188 (CPVCNGTG), and 195 to 202 (CDACYGNG).

The protein belongs to the DnaJ family. Homodimer. Zn(2+) serves as cofactor.

It is found in the cytoplasm. In terms of biological role, participates actively in the response to hyperosmotic and heat shock by preventing the aggregation of stress-denatured proteins and by disaggregating proteins, also in an autonomous, DnaK-independent fashion. Unfolded proteins bind initially to DnaJ; upon interaction with the DnaJ-bound protein, DnaK hydrolyzes its bound ATP, resulting in the formation of a stable complex. GrpE releases ADP from DnaK; ATP binding to DnaK triggers the release of the substrate protein, thus completing the reaction cycle. Several rounds of ATP-dependent interactions between DnaJ, DnaK and GrpE are required for fully efficient folding. Also involved, together with DnaK and GrpE, in the DNA replication of plasmids through activation of initiation proteins. This chain is Chaperone protein DnaJ, found in Francisella tularensis subsp. tularensis (strain FSC 198).